The following is a 1099-amino-acid chain: Probable inorganic carbon transporter subunit DabA (1099 aa).

The disordered stretch occupies residues 175-194 (RQGRRRFATTERRTRRTRRS). Over residues 176 to 194 (QGRRRFATTERRTRRTRRS) the composition is skewed to basic residues. Zn(2+) is bound by residues C514, D516, H722, and C737. Residues 1071–1099 (AGAGAAQPTRDAIELPEQASGPLPARDGQ) form a disordered region.

This sequence belongs to the inorganic carbon transporter (TC 9.A.2) DabA family. As to quaternary structure, forms a complex with DabB. Requires Zn(2+) as cofactor.

It is found in the cell membrane. In terms of biological role, part of an energy-coupled inorganic carbon pump. The polypeptide is Probable inorganic carbon transporter subunit DabA (Parafrankia sp. (strain EAN1pec)).